The chain runs to 419 residues: Murein hydrolase activator EnvC (419 aa).

The signal sequence occupies residues 1 to 34; it reads MTRAVKPRRFAIRPIIYASVLSAGVLLCAFSAHA. Coiled coils occupy residues 35-124 and 155-271; these read DERD…LDAA and LNQA…ATRK. Basic and acidic residues predominate over residues 252–270; it reads EREAREAQAVRDRQKEATR. Positions 252–290 are disordered; sequence EREAREAQAVRDRQKEATRKGTTYKPTESEKSLMSRTGG.

Belongs to the peptidase M23B family.

It localises to the periplasm. Functionally, activator of the cell wall hydrolases AmiA and AmiB. Required for septal murein cleavage and daughter cell separation during cell division. In vitro, exhibits weak endoproteolytic activity on beta-casein. The protein is Murein hydrolase activator EnvC (envC) of Escherichia coli (strain K12).